The chain runs to 98 residues: Putative membrane protein insertion efficiency factor (98 aa).

The protein belongs to the UPF0161 family.

It localises to the cell inner membrane. In terms of biological role, could be involved in insertion of integral membrane proteins into the membrane. The chain is Putative membrane protein insertion efficiency factor from Cupriavidus pinatubonensis (strain JMP 134 / LMG 1197) (Cupriavidus necator (strain JMP 134)).